Here is a 177-residue protein sequence, read N- to C-terminus: Large ribosomal subunit protein uL6 (177 aa).

Belongs to the universal ribosomal protein uL6 family. In terms of assembly, part of the 50S ribosomal subunit.

This protein binds to the 23S rRNA, and is important in its secondary structure. It is located near the subunit interface in the base of the L7/L12 stalk, and near the tRNA binding site of the peptidyltransferase center. This Magnetococcus marinus (strain ATCC BAA-1437 / JCM 17883 / MC-1) protein is Large ribosomal subunit protein uL6.